Here is an 861-residue protein sequence, read N- to C-terminus: Probable alpha,alpha-trehalose-phosphate synthase [UDP-forming] 10 (861 aa).

Ser-5 bears the Phosphoserine mark. Thr-32 carries the post-translational modification Phosphothreonine. Residues 59 to 546 (ERKIIVANFL…ARSFSQDLER (488 aa)) are glycosyltransferase.

In the N-terminal section; belongs to the glycosyltransferase 20 family. It in the C-terminal section; belongs to the trehalose phosphatase family.

It catalyses the reaction D-glucose 6-phosphate + UDP-alpha-D-glucose = alpha,alpha-trehalose 6-phosphate + UDP + H(+). This Arabidopsis thaliana (Mouse-ear cress) protein is Probable alpha,alpha-trehalose-phosphate synthase [UDP-forming] 10 (TPS10).